A 146-amino-acid polypeptide reads, in one-letter code: Basic phospholipase A2 73 (146 aa).

The first 19 residues, 1–19, serve as a signal peptide directing secretion; that stretch reads MYPAHLLVLLAVCVSLLGA. Positions 20–27 are excised as a propeptide; the sequence is ASIPPLPL. Disulfide bonds link Cys38–Cys98, Cys54–Cys145, Cys56–Cys72, Cys71–Cys126, Cys78–Cys119, Cys87–Cys112, and Cys105–Cys117. Ca(2+) is bound by residues Tyr55, Gly57, and Gly59. Residue His75 is part of the active site. Asp76 serves as a coordination point for Ca(2+). Asp120 is a catalytic residue.

The protein belongs to the phospholipase A2 family. Group I subfamily. D49 sub-subfamily. It depends on Ca(2+) as a cofactor. In terms of tissue distribution, expressed by the venom gland.

It is found in the secreted. The enzyme catalyses a 1,2-diacyl-sn-glycero-3-phosphocholine + H2O = a 1-acyl-sn-glycero-3-phosphocholine + a fatty acid + H(+). Snake venom phospholipase A2 (PLA2) that inhibits neuromuscular transmission by blocking acetylcholine release from the nerve termini. PLA2 catalyzes the calcium-dependent hydrolysis of the 2-acyl groups in 3-sn-phosphoglycerides. The protein is Basic phospholipase A2 73 of Hydrophis hardwickii (Hardwick's spine-bellied seasnake).